Reading from the N-terminus, the 227-residue chain is Orotidine 5'-phosphate decarboxylase (227 aa).

Substrate is bound by residues Asp-8, Lys-30, Asp-57–Thr-66, Thr-116, Arg-177, Gln-186, Gly-206, and Arg-207. Residue Lys-59 is the Proton donor of the active site.

This sequence belongs to the OMP decarboxylase family. Type 1 subfamily. As to quaternary structure, homodimer.

It catalyses the reaction orotidine 5'-phosphate + H(+) = UMP + CO2. It participates in pyrimidine metabolism; UMP biosynthesis via de novo pathway; UMP from orotate: step 2/2. Catalyzes the decarboxylation of orotidine 5'-monophosphate (OMP) to uridine 5'-monophosphate (UMP). This is Orotidine 5'-phosphate decarboxylase from Acinetobacter baumannii (strain AB307-0294).